Reading from the N-terminus, the 238-residue chain is MENSSLLLTALFNPDHLIIFSKMLLAMVLGSVIGLERELKRKPVGVKTCAIIAVTTCVLTIVSIQAAEHYAQVSENIRTDPMRLAAQVISGIGFLGAGVILHKKNDAISGLTTAAIIWASAGIGIAAGAGFVFDAVIATVMILVSIRLSPLVQRWVHRKSQRRRTKFNILVNDAESIGKVTQLLVNNQYRIEHIQVKDQSSGEVRLQIRCFSIDSTMLKDAYALLKAEDGVISVEVDN.

4 helical membrane passes run 16 to 36, 44 to 64, 81 to 101, and 123 to 143; these read HLIIFSKMLLAMVLGSVIGLE, VGVKTCAIIAVTTCVLTIVSI, PMRLAAQVISGIGFLGAGVIL, and IGIAAGAGFVFDAVIATVMIL.

The protein belongs to the MgtC/SapB family.

Its subcellular location is the cell inner membrane. This is an uncharacterized protein from Haemophilus influenzae (strain ATCC 51907 / DSM 11121 / KW20 / Rd).